Consider the following 220-residue polypeptide: Translation initiation factor 6 (220 aa).

Belongs to the eIF-6 family.

In terms of biological role, binds to the 50S ribosomal subunit and prevents its association with the 30S ribosomal subunit to form the 70S initiation complex. The protein is Translation initiation factor 6 of Pyrobaculum aerophilum (strain ATCC 51768 / DSM 7523 / JCM 9630 / CIP 104966 / NBRC 100827 / IM2).